The primary structure comprises 245 residues: Histone deacetylase HDT1 (245 aa).

Met1 is modified (N-acetylmethionine). Required to repress transcription stretches follow at residues 2–5 (EFWG) and 101–162 (GYSE…EEEE). A disordered region spans residues 99–245 (PQGYSEEEEE…HNKAKHAAAK (147 aa)). The span at 103-113 (SEEEEEEEEEV) shows a compositional bias: acidic residues. Over residues 114-124 (PAGNAAKAVAK) the composition is skewed to low complexity. Residues 137-162 (DDEEDESDSDGMDEDDSDGEDSEEEE) show a composition bias toward acidic residues. Positions 178–195 (TTPKAPVSAKKAKVAVTP) are enriched in low complexity. A compositionally biased stretch (polar residues) spans 208 to 234 (ANQSPKSASQVSCGSCKKTFNSGNALE). The residue at position 211 (Ser211) is a Phosphoserine. The segment at 218-241 (VSCGSCKKTFNSGNALESHNKAKH) adopts a C2H2-type zinc-finger fold.

Belongs to the histone deacetylase HD2 family. In terms of assembly, interacts with DNMT2. Interacts with DEK3. As to expression, expressed in leaves, roots, stems, young plantlets, flowers and siliques. Highest levels in ovules, embryos, shoot apical meristems and first leaves. Also expressed in somatic embryos.

Its subcellular location is the nucleus. The protein resides in the nucleolus. Probably mediates the deacetylation of lysine residues on the N-terminal part of the core histones (H2A, H2B, H3 and H4). Histone deacetylation gives a tag for epigenetic repression and plays an important role in transcriptional regulation, cell cycle progression and developmental events. Required for histone H3 'Lys-9' deacetylation. Involved in rRNA gene silencing in nucleolar dominance. Seems to be implicated in the regulation of genes involved in seeds development. This chain is Histone deacetylase HDT1, found in Arabidopsis thaliana (Mouse-ear cress).